The chain runs to 515 residues: Glucose-6-phosphate 1-dehydrogenase X (515 aa).

N-acetylalanine is present on Ala-2. NADP(+) is bound by residues 38–45, Arg-72, Tyr-147, and Lys-171; that span reads GASGDLAK. D-glucose 6-phosphate-binding positions include Lys-171, 201 to 205, Glu-239, and Asp-258; that span reads HYLGK. The Proton acceptor role is filled by His-263. Residue Arg-357 coordinates NADP(+). Lys-360 and Arg-365 together coordinate D-glucose 6-phosphate. 3 residues coordinate NADP(+): Lys-366, Arg-370, and Arg-393. D-glucose 6-phosphate is bound at residue Gln-395. NADP(+)-binding positions include 401–403, 421–423, Arg-487, and Tyr-503; these read YTK and DLT. Phosphotyrosine is present on Tyr-507. Trp-509 serves as a coordination point for NADP(+).

It belongs to the glucose-6-phosphate dehydrogenase family. As to quaternary structure, homotetramer; dimer of dimers. Interacts with SIRT2; the interaction is enhanced by H(2)O(2) treatment. Forms a ternary complex with ALDOB and TP53; this interaction is direct. ALDOB stabilizes the complex inhibiting G6PD activity and keeping oxidative pentose phosphate metabolism in check. In terms of processing, acetylated by ELP3 at Lys-403; acetylation inhibits its homodimerization and enzyme activity. Deacetylated by SIRT2 at Lys-403; deacetylation stimulates its enzyme activity.

The protein localises to the cytoplasm. Its subcellular location is the cytosol. It localises to the membrane. It carries out the reaction D-glucose 6-phosphate + NADP(+) = 6-phospho-D-glucono-1,5-lactone + NADPH + H(+). It participates in carbohydrate degradation; pentose phosphate pathway; D-ribulose 5-phosphate from D-glucose 6-phosphate (oxidative stage): step 1/3. Its function is as follows. Catalyzes the rate-limiting step of the oxidative pentose-phosphate pathway, which represents a route for the dissimilation of carbohydrates besides glycolysis. The main function of this enzyme is to provide reducing power (NADPH) and pentose phosphates for fatty acid and nucleic acid synthesis. The polypeptide is Glucose-6-phosphate 1-dehydrogenase X (G6pdx) (Mus musculus (Mouse)).